Reading from the N-terminus, the 278-residue chain is 4-deoxy-L-threo-5-hexosulose-uronate ketol-isomerase (278 aa).

The Zn(2+) site is built by His196, His198, Glu203, and His245.

Belongs to the KduI family. As to quaternary structure, homohexamer. Zn(2+) is required as a cofactor.

The catalysed reaction is 5-dehydro-4-deoxy-D-glucuronate = 3-deoxy-D-glycero-2,5-hexodiulosonate. Its pathway is glycan metabolism; pectin degradation; 2-dehydro-3-deoxy-D-gluconate from pectin: step 4/5. Functionally, catalyzes the isomerization of 5-dehydro-4-deoxy-D-glucuronate to 3-deoxy-D-glycero-2,5-hexodiulosonate. This Escherichia coli (strain 55989 / EAEC) protein is 4-deoxy-L-threo-5-hexosulose-uronate ketol-isomerase.